Here is a 59-residue protein sequence, read N- to C-terminus: Large ribosomal subunit protein uL30 (59 aa).

The protein belongs to the universal ribosomal protein uL30 family. In terms of assembly, part of the 50S ribosomal subunit.

The chain is Large ribosomal subunit protein uL30 from Listeria welshimeri serovar 6b (strain ATCC 35897 / DSM 20650 / CCUG 15529 / CIP 8149 / NCTC 11857 / SLCC 5334 / V8).